Consider the following 281-residue polypeptide: Very long chain fatty acid elongase 7 (281 aa).

Ala2 is modified (N-acetylalanine). Residues 2 to 27 (AFSDLTSRTVHLYDNWIKDADPRVED) are Lumenal-facing. A helical membrane pass occupies residues 28-48 (WLLMSSPLPQTILLGFYVYFV). The Cytoplasmic segment spans residues 49–72 (TSLGPKLMENRKPFELKKAMITYN). A helical transmembrane segment spans residues 73–93 (FFIVLFSVYMCYEFVMSGWGI). Topologically, residues 94–115 (GYSFRCDIVDYSRSPTALRMAR) are lumenal. The cysteines at positions 99 and 231 are disulfide-linked. Residues 116 to 136 (TCWLYYFSKFIELLDTIFFVL) traverse the membrane as a helical segment. 3-oxoeicosanoyl-CoA contacts are provided by Lys124, Arg137, Lys139, Gln142, and His147. The Cytoplasmic portion of the chain corresponds to 137 to 142 (RKKNSQ). A helical transmembrane segment spans residues 143 to 162 (VTFLHVFHHTIMPWTWWFGV). The HxxHH motif motif lies at 147-151 (HVFHH). His150 acts as the Nucleophile in catalysis. Residues 163 to 171 (KFAAGGLGT) are Lumenal-facing. The helical transmembrane segment at 172–194 (FHALLNTAVHVVMYSYYGLSALG) threads the bilayer. The 3-oxoeicosanoyl-CoA site is built by Tyr187, Lys204, Thr208, and Gln211. The Cytoplasmic portion of the chain corresponds to 195–206 (PAYQKYLWWKKY). A helical membrane pass occupies residues 207–227 (LTSLQLVQFVIVAIHISQFFF). Over 228 to 236 (MEDCKYQFP) the chain is Lumenal. Residues 237 to 257 (VFACIIMSYSFMFLLLFLHFW) traverse the membrane as a helical segment. Over 258 to 281 (YRAYTKGQRLPKTVKNGTCKNKDN) the chain is Cytoplasmic. A 3-oxoeicosanoyl-CoA-binding site is contributed by Arg266. Positions 277 to 281 (KNKDN) match the Di-lysine motif motif.

This sequence belongs to the ELO family. ELOVL7 subfamily. Homodimer. Interacts with TECR. Expressed in most tissues except heart and skeletal muscle.

The protein localises to the endoplasmic reticulum membrane. The catalysed reaction is a very-long-chain acyl-CoA + malonyl-CoA + H(+) = a very-long-chain 3-oxoacyl-CoA + CO2 + CoA. It carries out the reaction eicosanoyl-CoA + malonyl-CoA + H(+) = 3-oxodocosanoyl-CoA + CO2 + CoA. The enzyme catalyses (5Z,8Z,11Z,14Z)-eicosatetraenoyl-CoA + malonyl-CoA + H(+) = (7Z,10Z,13Z,16Z)-3-oxodocosatetraenoyl-CoA + CO2 + CoA. It catalyses the reaction (6Z,9Z,12Z)-octadecatrienoyl-CoA + malonyl-CoA + H(+) = (8Z,11Z,14Z)-3-oxoeicosatrienoyl-CoA + CO2 + CoA. The catalysed reaction is (9Z,12Z)-octadecadienoyl-CoA + malonyl-CoA + H(+) = (11Z,14Z)-3-oxoicosa-11,14-dienoyl-CoA + CO2 + CoA. It carries out the reaction (9Z)-octadecenoyl-CoA + malonyl-CoA + H(+) = 3-oxo-(11Z)-eicosenoyl-CoA + CO2 + CoA. The enzyme catalyses octadecanoyl-CoA + malonyl-CoA + H(+) = 3-oxoeicosanoyl-CoA + CO2 + CoA. It catalyses the reaction hexadecanoyl-CoA + malonyl-CoA + H(+) = 3-oxooctadecanoyl-CoA + CO2 + CoA. The catalysed reaction is (9Z,12Z,15Z)-octadecatrienoyl-CoA + malonyl-CoA + H(+) = (11Z,14Z,17Z)-3-oxoeicosatrienoyl-CoA + CO2 + CoA. Its pathway is lipid metabolism; fatty acid biosynthesis. Functionally, catalyzes the first and rate-limiting reaction of the four reactions that constitute the long-chain fatty acids elongation cycle. This endoplasmic reticulum-bound enzymatic process allows the addition of 2 carbons to the chain of long- and very long-chain fatty acids (VLCFAs) per cycle. Condensing enzyme with higher activity toward C18 acyl-CoAs, especially C18:3(n-3) acyl-CoAs and C18:3(n-6)-CoAs. Also active toward C20:4-, C18:0-, C18:1-, C18:2- and C16:0-CoAs, and weakly toward C20:0-CoA. Little or no activity toward C22:0-, C24:0-, or C26:0-CoAs. May participate in the production of saturated and polyunsaturated VLCFAs of different chain lengths that are involved in multiple biological processes as precursors of membrane lipids and lipid mediators. This chain is Very long chain fatty acid elongase 7, found in Homo sapiens (Human).